Reading from the N-terminus, the 135-residue chain is Ribosome-binding factor A (135 aa).

This sequence belongs to the RbfA family. In terms of assembly, monomer. Binds 30S ribosomal subunits, but not 50S ribosomal subunits or 70S ribosomes.

The protein localises to the cytoplasm. Functionally, one of several proteins that assist in the late maturation steps of the functional core of the 30S ribosomal subunit. Associates with free 30S ribosomal subunits (but not with 30S subunits that are part of 70S ribosomes or polysomes). Required for efficient processing of 16S rRNA. May interact with the 5'-terminal helix region of 16S rRNA. The polypeptide is Ribosome-binding factor A (Hahella chejuensis (strain KCTC 2396)).